Here is a 177-residue protein sequence, read N- to C-terminus: Acireductone dioxygenase (177 aa).

Fe(2+)-binding residues include His-99, His-101, Glu-105, and His-143. Ni(2+) is bound by residues His-99, His-101, Glu-105, and His-143.

This sequence belongs to the acireductone dioxygenase (ARD) family. In terms of assembly, monomer. Fe(2+) serves as cofactor. Requires Ni(2+) as cofactor.

It catalyses the reaction 1,2-dihydroxy-5-(methylsulfanyl)pent-1-en-3-one + O2 = 3-(methylsulfanyl)propanoate + CO + formate + 2 H(+). The catalysed reaction is 1,2-dihydroxy-5-(methylsulfanyl)pent-1-en-3-one + O2 = 4-methylsulfanyl-2-oxobutanoate + formate + 2 H(+). It participates in amino-acid biosynthesis; L-methionine biosynthesis via salvage pathway; L-methionine from S-methyl-5-thio-alpha-D-ribose 1-phosphate: step 5/6. Catalyzes 2 different reactions between oxygen and the acireductone 1,2-dihydroxy-3-keto-5-methylthiopentene (DHK-MTPene) depending upon the metal bound in the active site. Fe-containing acireductone dioxygenase (Fe-ARD) produces formate and 2-keto-4-methylthiobutyrate (KMTB), the alpha-ketoacid precursor of methionine in the methionine recycle pathway. Ni-containing acireductone dioxygenase (Ni-ARD) produces methylthiopropionate, carbon monoxide and formate, and does not lie on the methionine recycle pathway. This chain is Acireductone dioxygenase, found in Leptospira borgpetersenii serovar Hardjo-bovis (strain L550).